Consider the following 68-residue polypeptide: Guanine nucleotide-binding protein G(I)/G(S)/G(O) subunit gamma-5 (68 aa).

Serine 2 carries the post-translational modification N-acetylserine. Serine 2 carries the phosphoserine modification. Position 65 is a cysteine methyl ester (cysteine 65). Residue cysteine 65 is the site of S-geranylgeranyl cysteine attachment. The propeptide at serine 66–leucine 68 is removed in mature form.

The protein belongs to the G protein gamma family. In terms of assembly, g proteins are composed of 3 units, alpha, beta and gamma. Expressed in a variety of tissues.

The protein localises to the cell membrane. Its function is as follows. Guanine nucleotide-binding proteins (G proteins) are involved as a modulator or transducer in various transmembrane signaling systems. The beta and gamma chains are required for the GTPase activity, for replacement of GDP by GTP, and for G protein-effector interaction. This Bos taurus (Bovine) protein is Guanine nucleotide-binding protein G(I)/G(S)/G(O) subunit gamma-5 (GNG5).